Consider the following 562-residue polypeptide: F-box only protein 33 (562 aa).

The 47-residue stretch at 68–114 (AAGAASLPSELIVHIFSFLPAPDRLRASASCSHWRECLFYPALWPQL) folds into the F-box domain. Residues 155-173 (GGGPGDGGSGGGTDTGTGG) are compositionally biased toward gly residues. The segment at 155-176 (GGGPGDGGSGGGTDTGTGGEDG) is disordered.

Part of the SCF (SKP1-CUL1-F-box) E3 ubiquitin-protein ligase complex SCF(FBXO33) formed of CUL1, SKP1, RBX1 and FBXO33. Interacts via its N-terminus with YBX1 CSD domain. Directly interacts with SKP1 and CUL1.

It participates in protein modification; protein ubiquitination. In terms of biological role, substrate recognition component of a SCF (SKP1-CUL1-F-box protein) E3 ubiquitin-protein ligase complex which mediates the ubiquitination and subsequent proteasomal degradation of target proteins. Probably recognizes and binds to phosphorylated target proteins. Recognizes YBX1. In Mus musculus (Mouse), this protein is F-box only protein 33 (Fbxo33).